We begin with the raw amino-acid sequence, 649 residues long: 70 kDa protein (649 aa).

4 disordered regions span residues 28-80 (LRRG…DFSP), 257-286 (ALSL…AASD), 311-359 (TATS…SKQQ), and 458-550 (QSAE…PSSL). Residues 268–279 (KSTSPCNNSQLP) show a composition bias toward polar residues. Positions 330–349 (RLQRSLHLHSRSPHSSHFRP) are enriched in basic residues. Positions 504–515 (DVSNSETKNCPS) are enriched in polar residues. Low complexity-rich tracts occupy residues 524–533 (PNHLHPLLPG) and 540–550 (PRQLSPSPSSL).

Belongs to the tymoviridae protein p69 family.

This Solanum lycopersicum (Tomato) protein is 70 kDa protein.